The following is a 361-amino-acid chain: D-alanine--D-alanine ligase (361 aa).

In terms of domain architecture, ATP-grasp spans 140-345 (KHLFAQAGLD…YAELIEKLVA (206 aa)). Residue 173 to 228 (EGELGYPCFVKPANLGSSVGISKCRSREELDQAFELAFQYDRKIVVEEGVIGREIE) participates in ATP binding. Mg(2+) contacts are provided by Asp299, Glu312, and Asn314.

Belongs to the D-alanine--D-alanine ligase family. Mg(2+) is required as a cofactor. The cofactor is Mn(2+).

The protein resides in the cytoplasm. The enzyme catalyses 2 D-alanine + ATP = D-alanyl-D-alanine + ADP + phosphate + H(+). The protein operates within cell wall biogenesis; peptidoglycan biosynthesis. Its function is as follows. Cell wall formation. In Bacillus licheniformis (strain ATCC 14580 / DSM 13 / JCM 2505 / CCUG 7422 / NBRC 12200 / NCIMB 9375 / NCTC 10341 / NRRL NRS-1264 / Gibson 46), this protein is D-alanine--D-alanine ligase.